The chain runs to 452 residues: Protein phosphatase 1F (452 aa).

The 258-residue stretch at 153–410 folds into the PPM-type phosphatase domain; that stretch reads LVSIHAIRNT…DNITVMVVFL (258 aa). 4 residues coordinate Mn(2+): Asp195, Gly196, Asp357, and Asp401. Phosphoserine is present on Ser452.

Belongs to the PP2C family. Associates with FEM1B. The cofactor is Mg(2+). It depends on Mn(2+) as a cofactor. As to expression, expressed in the liver.

The enzyme catalyses O-phospho-L-seryl-[protein] + H2O = L-seryl-[protein] + phosphate. It catalyses the reaction O-phospho-L-threonyl-[protein] + H2O = L-threonyl-[protein] + phosphate. Functionally, dephosphorylates and concomitantly deactivates CaM-kinase II activated upon autophosphorylation, and CaM-kinases IV and I activated upon phosphorylation by CaM-kinase kinase. Promotes apoptosis. The protein is Protein phosphatase 1F (Ppm1f) of Mus musculus (Mouse).